A 106-amino-acid polypeptide reads, in one-letter code: uncharacterized protein (106 aa).

Residues 9–27 (ALAALAFTLGLIGLAAWAL) form a helical membrane-spanning segment. A disordered region spans residues 84–106 (TPKGPPPASALSPSPVAEPEPVV).

This sequence belongs to the FliO/MopB family.

It is found in the cell membrane. It localises to the bacterial flagellum basal body. This is an uncharacterized protein from Caulobacter vibrioides (strain ATCC 19089 / CIP 103742 / CB 15) (Caulobacter crescentus).